A 173-amino-acid chain; its full sequence is MSLKEFADALPDYAKDIRLNVGSLLGDQTLTEQRKYGLLLACAHGSGYKPIVEATEAEVAGKLSPEAANAARAAAAVMAMNNVYYRFVHLASNKEYGQMPAKLRMNVIGSPGIEKDDFELFSLAVSAMNGCGLCIDSHEKVLRQHGVAADVIQTAARVGAVIKAAATVHATAV.

The active-site Proton donor is Cys131. Cys131 and Cys134 are joined by a disulfide. The Cysteine sulfenic acid (-SOH) intermediate role is filled by Cys134.

Belongs to the AhpD family.

It catalyses the reaction N(6)-[(R)-dihydrolipoyl]-L-lysyl-[lipoyl-carrier protein] + a hydroperoxide = N(6)-[(R)-lipoyl]-L-lysyl-[lipoyl-carrier protein] + an alcohol + H2O. In terms of biological role, antioxidant protein with alkyl hydroperoxidase activity. Required for the reduction of the AhpC active site cysteine residues and for the regeneration of the AhpC enzyme activity. The polypeptide is Alkyl hydroperoxide reductase AhpD (Rhizorhabdus wittichii (strain DSM 6014 / CCUG 31198 / JCM 15750 / NBRC 105917 / EY 4224 / RW1) (Sphingomonas wittichii)).